We begin with the raw amino-acid sequence, 622 residues long: Coiled-coil domain-containing protein 17 (622 aa).

Coiled coils occupy residues 81–102 (RSALKRLTEEVQWLRLSLQEMR), 146–207 (ARRV…LEVL), and 294–320 (GELPVVEAENRRLEAEILALQMQRGRA). Disordered stretches follow at residues 334-356 (SLQPKGRRDPPLLPPPVAPPLPP) and 584-622 (PAVGFADPPPRTEEPLSGVKDRDEGLGPHHSSDLPPVSF). Pro residues predominate over residues 344-356 (PLLPPPVAPPLPP). Basic and acidic residues predominate over residues 593-615 (PRTEEPLSGVKDRDEGLGPHHSS).

In Homo sapiens (Human), this protein is Coiled-coil domain-containing protein 17 (CCDC17).